Here is a 230-residue protein sequence, read N- to C-terminus: Thioredoxin domain-containing protein PLP3B (230 aa).

The Thioredoxin domain maps to 89–173 (VSEGDFLGEV…GIAMDRLVGF (85 aa)). The interval 199-230 (EKRKEEDEEDYEYQESIRRSVRSSANVDSDSD) is disordered. Residues 220 to 230 (RSSANVDSDSD) are compositionally biased toward polar residues.

The protein belongs to the phosducin family. In terms of assembly, interacts with TUBB2, TUBB3, TUBB4 and TUBB5. As to expression, expressed in roots, cotyledons, leaves, stems and flowers.

Its subcellular location is the cytoplasm. It localises to the nucleus. In terms of biological role, tubulin-binding protein involved in microtubule formation. The sequence is that of Thioredoxin domain-containing protein PLP3B (PLP3B) from Arabidopsis thaliana (Mouse-ear cress).